The primary structure comprises 180 residues: Pro-glucagon (180 aa).

An N-terminal signal peptide occupies residues 1 to 20; that stretch reads MKSIYFVAGLFVMLVQGSWQ. The interval 23-56 is disordered; the sequence is LQDTEEKPRSFSTSQTDLLDDPDQMNEDKRHSQG. A Phosphoserine modification is found at Ser-54. A propeptide spanning residues 84–89 is cleaved from the precursor; sequence NRNEIA. Phosphoserine occurs at positions 105 and 108. Arginine amide is present on Arg-127. Residues 131-145 constitute a propeptide that is removed on maturation; it reads DFPEEVTIVEELRRR. Ser-150 and Ser-152 each carry phosphoserine.

This sequence belongs to the glucagon family. In terms of processing, proglucagon is post-translationally processed in a tissue-specific manner in pancreatic A cells and intestinal L cells. In pancreatic A cells, the major bioactive hormone is glucagon cleaved by PCSK2/PC2. In the intestinal L cells PCSK1/PC1 liberates GLP-1, GLP-2, glicentin and oxyntomodulin. GLP-1 is further N-terminally truncated by post-translational processing in the intestinal L cells resulting in GLP-1(7-37) GLP-1-(7-36)amide. The C-terminal amidation is neither important for the metabolism of GLP-1 nor for its effects on the endocrine pancreas. In terms of tissue distribution, glucagon is secreted in the A cells of the islets of Langerhans. GLP-1, GLP-2, oxyntomodulin and glicentin are secreted from enteroendocrine cells throughout the gastrointestinal tract. GLP-1 and GLP-2 are also secreted in selected neurons in the brain.

Its subcellular location is the secreted. Functionally, plays a key role in glucose metabolism and homeostasis. Regulates blood glucose by increasing gluconeogenesis and decreasing glycolysis. A counterregulatory hormone of insulin, raises plasma glucose levels in response to insulin-induced hypoglycemia. Plays an important role in initiating and maintaining hyperglycemic conditions in diabetes. Potent stimulator of glucose-dependent insulin release. Also stimulates insulin release in response to IL6. Plays important roles on gastric motility and the suppression of plasma glucagon levels. May be involved in the suppression of satiety and stimulation of glucose disposal in peripheral tissues, independent of the actions of insulin. Has growth-promoting activities on intestinal epithelium. May also regulate the hypothalamic pituitary axis (HPA) via effects on LH, TSH, CRH, oxytocin, and vasopressin secretion. Increases islet mass through stimulation of islet neogenesis and pancreatic beta cell proliferation. Inhibits beta cell apoptosis. Its function is as follows. Stimulates intestinal growth and up-regulates villus height in the small intestine, concomitant with increased crypt cell proliferation and decreased enterocyte apoptosis. The gastrointestinal tract, from the stomach to the colon is the principal target for GLP-2 action. Plays a key role in nutrient homeostasis, enhancing nutrient assimilation through enhanced gastrointestinal function, as well as increasing nutrient disposal. Stimulates intestinal glucose transport and decreases mucosal permeability. In terms of biological role, significantly reduces food intake. Inhibits gastric emptying in humans. Suppression of gastric emptying may lead to increased gastric distension, which may contribute to satiety by causing a sensation of fullness. Functionally, may modulate gastric acid secretion and the gastro-pyloro-duodenal activity. May play an important role in intestinal mucosal growth in the early period of life. This chain is Pro-glucagon (GCG), found in Octodon degus (Degu).